The sequence spans 780 residues: Pumilio domain-containing protein C4G8.03c (780 aa).

3 disordered regions span residues 1–29, 298–330, and 358–411; these read MVNR…LSSY, LSHF…LHSK, and NHHS…GKTV. Residues 298-307 are compositionally biased toward basic and acidic residues; sequence LSHFPDHLDP. Over residues 311–322 the composition is skewed to low complexity; the sequence is PSPYQPSSLQPL. Positions 358 to 382 are enriched in polar residues; that stretch reads NHHSSLSMDNDPTNVSTKNRNNQTV. A PUM-HD domain is found at 435–778; that stretch reads EKSDDLSNLL…HILAKLTSST (344 aa). Pumilio repeat units follow at residues 462-497, 498-533, 534-569, 570-606, 607-642, 643-678, 679-714, 715-752, and 753-780; these read GFLG…LFFP, EIRQ…SMLN, GIGE…SLLL, KIII…PLFL, SMEE…RLVN, SIIK…RIIE, KFFG…QMLQ, EFLS…LILR, and SISH…STSS.

This is Pumilio domain-containing protein C4G8.03c from Schizosaccharomyces pombe (strain 972 / ATCC 24843) (Fission yeast).